A 211-amino-acid chain; its full sequence is 3-demethoxyubiquinol 3-hydroxylase (211 aa).

Positions 60, 90, 93, 142, 174, and 177 each coordinate Fe cation.

Belongs to the COQ7 family. Requires Fe cation as cofactor.

The protein resides in the cell membrane. The catalysed reaction is a 5-methoxy-2-methyl-3-(all-trans-polyprenyl)benzene-1,4-diol + AH2 + O2 = a 3-demethylubiquinol + A + H2O. The protein operates within cofactor biosynthesis; ubiquinone biosynthesis. Catalyzes the hydroxylation of 2-nonaprenyl-3-methyl-6-methoxy-1,4-benzoquinol during ubiquinone biosynthesis. This Francisella tularensis subsp. novicida (strain U112) protein is 3-demethoxyubiquinol 3-hydroxylase.